The chain runs to 125 residues: Cyclic diguanosine monophosphate-binding protein PA4608 (125 aa).

6–13 (DERRRFHR) is a binding site for 3',3'-c-di-GMP. Positions 7-103 (ERRRFHRIAF…SISHLRRLVE (97 aa)) constitute a PilZ domain. An RXXXR motif; surrounds the surface of the c-di-GMP binding site motif is present at residues 9–13 (RRFHR). The short motif at 35–40 (DVSLHG) is the DXSXXG motif; surrounds the surface of the c-di-GMP binding site element. Residue Trp77 coordinates 3',3'-c-di-GMP.

Monomer in both c-di-GMP-bound and free forms.

Binds the second messenger bis-(3'-5') cyclic dimeric guanosine monophosphate (c-di-GMP). Can bind two c-di-GMP molecules per monomer. May play a role in bacterial second-messenger regulated processes. Binding to c-di-GMP induces a conformational change of the C- and N-termini resulting in the exposure of a highly negative surface on one side of the protein to a possible effector protein. The chain is Cyclic diguanosine monophosphate-binding protein PA4608 from Pseudomonas aeruginosa (strain ATCC 15692 / DSM 22644 / CIP 104116 / JCM 14847 / LMG 12228 / 1C / PRS 101 / PAO1).